Consider the following 301-residue polypeptide: MANLRDIRKKIGSVKNTQKITHAMKLVSTSKLRKAEEVARNSRAYALKLDAVFDDVLSKMKNQGIEDIQSKYFRELERLEIKKVDIIFITADKGLCGGFNTNTIKKVLACTNEYKEKDIKVRLRGIGKKGNEYFSFNGIEVLDKINNLSSTPNYERAQEFMKKVVEDYLSGKTDKVIIIHNGFKNMITQEIRVKTILPIGYKIIHQNPQPNEVQETITSEPSGSEDEILDSLAEKYVEYSLYYALIDSLAAEHSARMQAMDTATNNAKDLVKTLTISYNKARQEAITTELVEINAGVEALK.

The protein belongs to the ATPase gamma chain family. As to quaternary structure, F-type ATPases have 2 components, CF(1) - the catalytic core - and CF(0) - the membrane proton channel. CF(1) has five subunits: alpha(3), beta(3), gamma(1), delta(1), epsilon(1). CF(0) has three main subunits: a, b and c.

Its subcellular location is the cell inner membrane. Produces ATP from ADP in the presence of a proton gradient across the membrane. The gamma chain is believed to be important in regulating ATPase activity and the flow of protons through the CF(0) complex. This is ATP synthase gamma chain from Helicobacter pylori (strain P12).